An 822-amino-acid polypeptide reads, in one-letter code: LPS-assembly protein LptD (822 aa).

An N-terminal signal peptide occupies residues 1–37; the sequence is MRRASRSPFILSPVAHAVSRLVLCATLGWTYAGSGHA. The disordered stretch occupies residues 38–97; the sequence is QVPAPAGGSEVPLGARPPASAPVAAQQETPLKLKSSPALAEEVPNGPGDEGPTFVFGDSV.

It belongs to the LptD family. Component of the lipopolysaccharide transport and assembly complex. Interacts with LptE and LptA.

Its subcellular location is the cell outer membrane. Together with LptE, is involved in the assembly of lipopolysaccharide (LPS) at the surface of the outer membrane. The sequence is that of LPS-assembly protein LptD from Polaromonas sp. (strain JS666 / ATCC BAA-500).